Consider the following 396-residue polypeptide: Penicillopepsin-1 (396 aa).

The first 20 residues, 1–20 (MVVFSKVTASLACFSAVVSA), serve as a signal peptide directing secretion. Positions 21–72 (AAVPVKSPRQGFSVNQVQKTVTGTRTVNLPGVYANALAKYGATVPANVHAAA) are cleaved as a propeptide — activation peptide. One can recognise a Peptidase A1 domain in the interval 88–393 (YLTPVKIGES…DAEGPRLGFA (306 aa)). Catalysis depends on residues D104 and D285. N311 carries N-linked (GlcNAc...) asparagine glycosylation. A disulfide bridge connects residues C321 and C356.

It belongs to the peptidase A1 family. In terms of assembly, monomer.

The protein localises to the secreted. The enzyme catalyses Hydrolysis of proteins with broad specificity similar to that of pepsin A, preferring hydrophobic residues at P1 and P1', but also cleaving 20-Gly-|-Glu-21 in the B chain of insulin. Clots milk, and activates trypsinogen.. Its function is as follows. Secreted aspartic endopeptidase that allows assimilation of proteinaceous substrates. The scissile peptide bond is attacked by a nucleophilic water molecule activated by two aspartic residues in the active site. Shows a broad primary substrate specificity. Favors hydrophobic residues at the P1 and P1' positions, but can also activate trypsinogen and hydrolyze the B chain of insulin between positions 'Gly-20' and 'Glu-21'. The sequence is that of Penicillopepsin-1 (pepA) from Penicillium rubens (strain ATCC 28089 / DSM 1075 / NRRL 1951 / Wisconsin 54-1255) (Penicillium chrysogenum).